We begin with the raw amino-acid sequence, 121 residues long: MSAAALALAAAEEGGASAAAPDASGKSKKGARPCFRRNLQAGSCMTGRQTPVRRSPAGPRLEPGVLRLNPWKITLRLQGASHLMLSLSSLTAYAARGQWPKKLAQQPPRLEGSQKERSPVV.

The segment covering 12 to 24 (EEGGASAAAPDAS) has biased composition (low complexity). Disordered stretches follow at residues 12–63 (EEGG…RLEP) and 101–121 (KKLA…SPVV). Residues 26–35 (KSKKGARPCF) are compositionally biased toward basic residues. The span at 40–49 (QAGSCMTGRQ) shows a compositional bias: polar residues. Residues 112-121 (GSQKERSPVV) show a composition bias toward basic and acidic residues.

This is an uncharacterized protein from Homo sapiens (Human).